A 597-amino-acid polypeptide reads, in one-letter code: Elongation factor 4 (597 aa).

The 183-residue stretch at Asp2–Lys184 folds into the tr-type G domain. GTP-binding positions include Asp14–Thr19 and Asn131–Asp134.

Belongs to the TRAFAC class translation factor GTPase superfamily. Classic translation factor GTPase family. LepA subfamily.

It localises to the cell inner membrane. The catalysed reaction is GTP + H2O = GDP + phosphate + H(+). Required for accurate and efficient protein synthesis under certain stress conditions. May act as a fidelity factor of the translation reaction, by catalyzing a one-codon backward translocation of tRNAs on improperly translocated ribosomes. Back-translocation proceeds from a post-translocation (POST) complex to a pre-translocation (PRE) complex, thus giving elongation factor G a second chance to translocate the tRNAs correctly. Binds to ribosomes in a GTP-dependent manner. The protein is Elongation factor 4 of Paraburkholderia phymatum (strain DSM 17167 / CIP 108236 / LMG 21445 / STM815) (Burkholderia phymatum).